A 94-amino-acid chain; its full sequence is uncharacterized protein (94 aa).

Over residues 33–42 (INSLPTFTKP) the composition is skewed to polar residues. The interval 33–57 (INSLPTFTKPNDSNNNVNKSSNDGV) is disordered. Over residues 43–57 (NDSNNNVNKSSNDGV) the composition is skewed to low complexity.

This is an uncharacterized protein from Dictyostelium discoideum (Social amoeba).